The following is a 910-amino-acid chain: E3 ubiquitin-protein ligase MARCHF6 (910 aa).

The residue at position 1 (methionine 1) is an N-acetylmethionine. Residues 1-62 (MDTAEEDICR…ELCKHRFAFT (62 aa)) form an RING-CH-type zinc finger. At 1–91 (MDTAEEDICR…LVTSIGTAIR (91 aa)) the chain is on the cytoplasmic side. Residues cysteine 9, cysteine 12, cysteine 26, cysteine 28, histidine 36, cysteine 39, cysteine 52, and cysteine 55 each contribute to the Zn(2+) site. A helical membrane pass occupies residues 92–112 (YWFHYTLVAFAWLGVVPLTAC). Residues 113-142 (RIYKCLFTGSVSSLLTLPLDMLSTENLLAD) lie on the Extracellular side of the membrane. The helical transmembrane segment at 143–163 (CLQGCFVVTCTLCAFISLVWL) threads the bilayer. Residues 164–283 (REQIVHGGAP…WERMLGLDGS (120 aa)) lie on the Cytoplasmic side of the membrane. Residues 185-256 (AAGHHQNEAP…AADANNGAQD (72 aa)) are disordered. Over residues 223–248 (DAQDDQAEEEEEDNEEEDDAGVEDAA) the composition is skewed to acidic residues. A helical transmembrane segment spans residues 284-304 (LVFLEHVFWVVSLNTLFILVF). The Extracellular portion of the chain corresponds to 305–336 (AFCPYHIGHFSLVGLGFEEHVQASHFEGLITT). Residues 337-357 (IVGYILLAITLIICHGLATLV) form a helical membrane-spanning segment. Topologically, residues 358–376 (KFHRSRRLLGVCYIVVKVS) are cytoplasmic. A helical membrane pass occupies residues 377–397 (LLVVVEIGVFPLICGWWLDIC). The Extracellular portion of the chain corresponds to 398 to 421 (SLEMFDATLKDRELSFQSAPGTTM). A helical transmembrane segment spans residues 422-442 (FLHWLVGMVYVFYFASFILLL). Over 443 to 480 (REVLRPGVLWFLRNLNDPDFNPVQEMIHLPIYRHLRRF) the chain is Cytoplasmic. The helical transmembrane segment at 481 to 501 (ILSVIVFGSIVLLMLWLPIRI) threads the bilayer. Topologically, residues 502-519 (IKSVLPNFLPYNVMLYSD) are extracellular. The helical transmembrane segment at 520 to 540 (APVSELSLELLLLQVVLPALL) threads the bilayer. At 541–632 (EQRTHEAVAE…YRRPLNFPLR (92 aa)) the chain is on the cytoplasmic side. A helical membrane pass occupies residues 633–653 (IFLLIVFMCITLLIASLICLT). The Extracellular portion of the chain corresponds to 654–678 (LPVFAGRWLMSFWTGTAKIHELYTA). A helical transmembrane segment spans residues 679–699 (ACGLYVCWLTIRAVTVMVAWM). At 700-721 (PQGRRVVFQKVKEWSLMIMKTL) the chain is on the cytoplasmic side. Residues 722–742 (IVAVLLAGVVPLLLGLLFELV) traverse the membrane as a helical segment. The Extracellular segment spans residues 743-764 (IVAPLRVPLDQTPLFYPWQDWA). A helical transmembrane segment spans residues 765–785 (LGVLHAKIIAAITLMGPQWWL). At 786-815 (KTVIEQVYANGIRNIDLHYIVRKLAAPVIS) the chain is on the cytoplasmic side. The helical transmembrane segment at 816-836 (VLLLSLCVPYVIASGVVPLLG) threads the bilayer. Over 837-848 (VTAEMQNLVHRR) the chain is Extracellular. The helical transmembrane segment at 849–869 (IYPFLLMVVVLMAILSFQVRQ) threads the bilayer. The Cytoplasmic segment spans residues 870-910 (FKRLYEHIKNDKYLVGQRLVNYERKSGKQGSSPPPPQSSQE).

Belongs to the DOA10/MARCHF6 family. In terms of assembly, interacts with DIO2. Interacts with SQLE. Auto-ubiquitinated, which results in proteasomal degradation. Deubiquitinated by USP19; protecting MARCHF6 from p97-mediated proteasomal degradation.

It localises to the endoplasmic reticulum membrane. It catalyses the reaction S-ubiquitinyl-[E2 ubiquitin-conjugating enzyme]-L-cysteine + [acceptor protein]-L-lysine = [E2 ubiquitin-conjugating enzyme]-L-cysteine + N(6)-ubiquitinyl-[acceptor protein]-L-lysine.. Its pathway is protein modification; protein ubiquitination. Functionally, endoplasmic reticulum membrane-associated E3 ubiquitin ligase that plays a critical role in mitigating endoplasmic reticulum stress, the regulation of cholesterol and lipid homeostasis, and ferroptosis. Acts as a pivotal component of both the Ac/N-degron pathway (targeting the N-terminal acetyl group of substrates) and the ER-associated protein degradation-cytosol (ERAD-C) pathway (targeting misfolded substrates). For instance, mediates the degradation of Ac/N-degron-bearing proteins such as the G-protein regulator RGS2 and the lipid droplet protein PLIN2. Suppresses endoplasmic reticulum stress and ferroptosis through cytosolic POMC degradation. Prevents ferroptosis by acting as a NADPH sensor during lipid peroxidation through its C-terminal regulatory region. Facilitates also the degradation of selected endoplasmic reticulum proteins by associating with signal peptide peptidase for the turnover of endogenous tail-anchored proteins. Promotes ubiquitination of DIO2, leading to its degradation. By ubiquitinating and thereby modulating the stability of many proteins of the cholesterol pathway including SQLE, CYP51A1, CYP11A1 and HMGCR, acts as a crucial post-translational regulator of cholesterol synthesis. This chain is E3 ubiquitin-protein ligase MARCHF6 (MARCHF6), found in Pongo abelii (Sumatran orangutan).